The following is a 349-amino-acid chain: KH domain-containing, RNA-binding, signal transduction-associated protein 2 (349 aa).

One can recognise a KH domain in the interval 65-135 (LIPVKQYPKF…HLSDELHVLI (71 aa)). 2 disordered regions span residues 181-263 (SEES…PPPA) and 321-349 (EWAT…YGRY). Positions 218–231 (RGVLTPRGTTVTRG) are enriched in low complexity. Omega-N-methylarginine is present on residues Arg-230 and Arg-240. The segment covering 340 to 349 (GYREHPYGRY) has biased composition (basic and acidic residues).

Belongs to the KHDRBS family. Self-associates to form homooligomers. Interacts with KHDRBS1/SAM68; heterooligomer formation of KHDRBS family proteins may modulate RNA substrate specificity. Interacts with RBMX, SAFB, SFRS9 and YTHDC1. Interacts with FYN and PLCG1 (via SH3 domain). Interacts (phosphorylated) with FYN, GRB2, PLCG1 and RASA1 (via SH2 domain). In terms of processing, methylated. Tyrosine phosphorylated by FYN, PTK6 and SRC. Tyrosine phosphorylated by SRC during mitosis. In terms of tissue distribution, expressed in heart, skin, brain, colon, spleen, kidney, cervix and testis. In adult cerebellum expressed predominantly in Purkinje cells and in the hippocampus is abundantly expressed in glutamatergic dentate granule cells and in specific inhibitory Schaffer collateral-associated and path-associated interneurons; expression is restricted to neuronal subpopulations largely non-overlapping with expression of KHDRBS3/SLM-2 (at protein level).

It localises to the nucleus. RNA-binding protein that plays a role in the regulation of alternative splicing and influences mRNA splice site selection and exon inclusion. Binds both poly(A) and poly(U) homopolymers. Phosphorylation by PTK6 inhibits its RNA-binding ability. Induces an increased concentration-dependent incorporation of exon in CD44 pre-mRNA by direct binding to purine-rich exonic enhancer. Can regulate alternative splicing of neurexins NRXN1-3 in the laminin G-like domain 6 containing the evolutionary conserved neurexin alternative spliced segment 4 (AS4) involved in neurexin selective targeting to postsynaptic partners. Regulates cell-type specific alternative splicing of NRXN1 at AS4 and acts synergystically with SAM68 in exon skipping. In contrast acts antagonistically with SAM68 in NRXN3 exon skipping at AS4. Its phosphorylation by FYN inhibits its ability to regulate splice site selection. May function as an adapter protein for Src kinases during mitosis. The protein is KH domain-containing, RNA-binding, signal transduction-associated protein 2 (Khdrbs2) of Mus musculus (Mouse).